Consider the following 479-residue polypeptide: V-type ATP synthase beta chain (479 aa).

The tract at residues 458 to 479 (EGDSEREAPKMDSPHEEISEKS) is disordered.

It belongs to the ATPase alpha/beta chains family.

In terms of biological role, produces ATP from ADP in the presence of a proton gradient across the membrane. The V-type beta chain is a regulatory subunit. The sequence is that of V-type ATP synthase beta chain from Nitrosococcus oceani (strain ATCC 19707 / BCRC 17464 / JCM 30415 / NCIMB 11848 / C-107).